We begin with the raw amino-acid sequence, 577 residues long: Arginine--tRNA ligase (577 aa).

Residues 122 to 132 carry the 'HIGH' region motif; the sequence is PNVAKEMHVGH.

The protein belongs to the class-I aminoacyl-tRNA synthetase family. Monomer.

The protein resides in the cytoplasm. It catalyses the reaction tRNA(Arg) + L-arginine + ATP = L-arginyl-tRNA(Arg) + AMP + diphosphate. This Salmonella gallinarum (strain 287/91 / NCTC 13346) protein is Arginine--tRNA ligase.